The primary structure comprises 270 residues: Phosphatidylglycerol--prolipoprotein diacylglyceryl transferase (270 aa).

4 helical membrane passes run 19–39 (FPVY…LWLA), 56–76 (LVLI…VIFE), 92–112 (QGGL…ILFA), and 116–136 (GVSF…GQAI). R138 contributes to the a 1,2-diacyl-sn-glycero-3-phospho-(1'-sn-glycerol) binding site. A run of 3 helical transmembrane segments spans residues 178–198 (HPTF…LLAL), 206–226 (GELF…VEGL), and 236–256 (LRIA…FIIV).

The protein belongs to the Lgt family.

Its subcellular location is the cell membrane. The catalysed reaction is L-cysteinyl-[prolipoprotein] + a 1,2-diacyl-sn-glycero-3-phospho-(1'-sn-glycerol) = an S-1,2-diacyl-sn-glyceryl-L-cysteinyl-[prolipoprotein] + sn-glycerol 1-phosphate + H(+). It participates in protein modification; lipoprotein biosynthesis (diacylglyceryl transfer). Its function is as follows. Catalyzes the transfer of the diacylglyceryl group from phosphatidylglycerol to the sulfhydryl group of the N-terminal cysteine of a prolipoprotein, the first step in the formation of mature lipoproteins. The sequence is that of Phosphatidylglycerol--prolipoprotein diacylglyceryl transferase from Bacillus cereus (strain Q1).